The primary structure comprises 835 residues: Protein translocase subunit SecA (835 aa).

ATP-binding positions include Gln-85, 103-107 (GEGKT), and Asp-492. The tract at residues 788–807 (VQGEAVHPSSDGEEAKKKPV) is disordered. Zn(2+)-binding residues include Cys-819, Cys-821, Cys-830, and Cys-831.

It belongs to the SecA family. As to quaternary structure, monomer and homodimer. Part of the essential Sec protein translocation apparatus which comprises SecA, SecYEG and auxiliary proteins SecDF. Other proteins may also be involved. It depends on Zn(2+) as a cofactor.

The protein resides in the cell membrane. The protein localises to the cytoplasm. The catalysed reaction is ATP + H2O + cellular proteinSide 1 = ADP + phosphate + cellular proteinSide 2.. In terms of biological role, part of the Sec protein translocase complex. Interacts with the SecYEG preprotein conducting channel. Has a central role in coupling the hydrolysis of ATP to the transfer of proteins into and across the cell membrane, serving as an ATP-driven molecular motor driving the stepwise translocation of polypeptide chains across the membrane. This is Protein translocase subunit SecA from Bacillus cereus (strain G9842).